The following is a 518-amino-acid chain: Cytochrome P450 26C1 (518 aa).

Residues 293 to 313 form a helical membrane-spanning segment; the sequence is LLFAAFFTTASASTSLILLLL. Cys455 serves as a coordination point for heme.

The protein belongs to the cytochrome P450 family. Heme serves as cofactor.

Its subcellular location is the membrane. The enzyme catalyses an organic molecule + reduced [NADPH--hemoprotein reductase] + O2 = an alcohol + oxidized [NADPH--hemoprotein reductase] + H2O + H(+). It catalyses the reaction all-trans-retinoate + reduced [NADPH--hemoprotein reductase] + O2 = all-trans-4-hydroxyretinoate + oxidized [NADPH--hemoprotein reductase] + H2O + H(+). It carries out the reaction all-trans-4-hydroxyretinoate + reduced [NADPH--hemoprotein reductase] + O2 = all-trans-4-oxoretinoate + oxidized [NADPH--hemoprotein reductase] + 2 H2O + H(+). The catalysed reaction is 9-cis-retinoate + reduced [NADPH--hemoprotein reductase] + O2 = 9-cis-4-hydroxyretinoate + oxidized [NADPH--hemoprotein reductase] + H2O + H(+). The enzyme catalyses 9-cis-4-hydroxyretinoate + reduced [NADPH--hemoprotein reductase] + O2 = 9-cis-4-oxoretinoate + oxidized [NADPH--hemoprotein reductase] + 2 H2O + H(+). It catalyses the reaction all-trans-4-hydroxy-13,14-dihydroretinoate + reduced [NADPH--hemoprotein reductase] + O2 = all-trans-4-oxo-13,14-dihydroretinoate + oxidized [NADPH--hemoprotein reductase] + 2 H2O + H(+). It carries out the reaction all-trans-13,14-dihydroretinoate + reduced [NADPH--hemoprotein reductase] + O2 = all-trans-4-hydroxy-13,14-dihydroretinoate + oxidized [NADPH--hemoprotein reductase] + H2O + H(+). In terms of biological role, a cytochrome P450 monooxygenase involved in the metabolism of retinoates (RAs), the active metabolites of vitamin A, and critical signaling molecules in animals. RAs exist as at least four different isomers: all-trans-RA (atRA), 9-cis-RA, 13-cis-RA, and 9,13-dicis-RA, where atRA is considered to be the biologically active isomer, although 9-cis-RA and 13-cis-RA also have activity. Catalyzes the oxidation of atRA primarily at C-4. Oxidation of atRA limits its biological activity and initiates a degradative process leading to its eventual elimination, thereby contributes to the regulation of atRA homeostasis and signaling. Able to metabolize other RAs such as 9-cis with high efficiency. Can oxidize all-trans-13,14-dihydroretinoate (DRA) to metabolites which could include all-trans-4-oxo-DRA, all-trans-4-hydroxy-DRA, all-trans-5,8-epoxy-DRA, and all-trans-18-hydroxy-DRA. Shares sequence similarity with other CYP26 family members, but has higher affinity to 9-cis-RA and is much less sensitive to the inhibitory effects of ketoconazole. In cooperation with Cyp26a1, contributes to the CNS patterning and the development of regions of higher visual acuity. The polypeptide is Cytochrome P450 26C1 (Mus musculus (Mouse)).